The primary structure comprises 626 residues: MLSSLLAGAGLVALAASHPTSHGNALTRRAVDINAFRLTATSEYVNATVAVSEPSLRFLKRADYLETATELVKSVAKDATFRVVEDHYVGSNGIAHVNFKQTANGLDIDNADFNINVAKDGSIFSYGNSFYTGAIPANPLQKRDFSDPVDALKAANDKLQLAVTAEKASAESTGAKETFTLKGTSGAVKDPEAKLVYLVKSDGNLALTWRVETDIMSNWLLTYVDAATNQEIHGVVDYSADATYQVYPWGLNDPTEGSRAVVTNPWDTTASEFTWQGTGTTTYNVPRGNNAIAQSNTDGGSDYLSNYRPTSTSQNFSYPYTLQMSPPSTYVDASVTQLFYTANVYHDLLHSLGFNERAGNFEVNNNGAGGSGNDMVILNTHDGSDTNNANFATPPDGQPGRMRMFLWDLSTPNRDSSFEAGVVIHEYTHGLSNRLTGGPANSNCLNALESGGMGEGWGDFMATAIRLKAGDTRAKDYTMGSWIANDPKGIRTYPYSTSLTTNPHKYTDVNNLRGVHPIGTVWATMLYEVMWNLIDRYGKNDGAKPTFGANGAPTDGKYLAMKLVVDGMALPNFVQARDAILDADVALTGGANKCDIWKGFAKRGLGSGARYSSTARTGSTALPSGC.

Positions 1 to 17 (MLSSLLAGAGLVALAAS) are cleaved as a signal peptide. Positions 18–241 (HPTSHGNALT…IHGVVDYSAD (224 aa)) are excised as a propeptide. The N-linked (GlcNAc...) asparagine glycan is linked to asparagine 315. Histidine 425 serves as a coordination point for Zn(2+). Glutamate 426 is a catalytic residue. Position 429 (histidine 429) interacts with Zn(2+). The interval 606–626 (GSGARYSSTARTGSTALPSGC) is disordered. A compositionally biased stretch (polar residues) spans 610 to 626 (RYSSTARTGSTALPSGC).

The protein belongs to the peptidase M36 family. It depends on Zn(2+) as a cofactor.

Its subcellular location is the secreted. Secreted metalloproteinase that allows assimilation of proteinaceous substrates. In Phaeosphaeria nodorum (strain SN15 / ATCC MYA-4574 / FGSC 10173) (Glume blotch fungus), this protein is Extracellular metalloproteinase 1 (MEP1).